Consider the following 309-residue polypeptide: MKKLGTLFVLFLSVIVLVACASGKKDAASGQKLKVVATNSIIADITKNIAGDKIDLHSIVPIGQDPHEYEPLPEDVKKTSEADLIFYNGINLETGGNAWFSKLVENAKKTENKDYFAVSEGVDVIYLEGKNEKGKEDPHAWLNLENGIIFAKNIAKQLSAKDPNNKEFYEKNLKEYTDKLDKLDKESKDKFNNIPAEKKLIVTSEGAFKYFSKAYGVPSAYIWEINTEEEGTPEQIKTLVEKLRQTKVPSLFVESSVDDRPMKTVSQDTNIPIYAQIFTDSIAEQGKEGDSYYNMMKYNLDKIAEGLAK.

An N-terminal signal peptide occupies residues Met1–Ala19. A lipid anchor (N-palmitoyl cysteine) is attached at Cys20. Residue Cys20 is the site of S-diacylglycerol cysteine attachment. The Mn(2+) site is built by His67, His139, Glu205, and Asp280.

It belongs to the bacterial solute-binding protein 9 family. Lipoprotein receptor antigen (Lrai) subfamily.

Its subcellular location is the cell membrane. Part of the ATP-riven (ABC) transport system PsaABC involved in manganese import. Binds manganese with high affinity and specificity and delivers it to the membrane permease for translocation into the cytoplasm. Also acts as an adhesin which is involved on adherence to extracellular matrix. The protein is Manganese ABC transporter substrate-binding lipoprotein PsaA (psaA) of Streptococcus mitis.